The chain runs to 171 residues: Ribosome maturation factor RimM (171 aa).

A PRC barrel domain is found at 97–170 (EGEYYYHEII…LVTIHVMEGL (74 aa)).

The protein belongs to the RimM family. In terms of assembly, binds ribosomal protein uS19.

It localises to the cytoplasm. An accessory protein needed during the final step in the assembly of 30S ribosomal subunit, possibly for assembly of the head region. Essential for efficient processing of 16S rRNA. May be needed both before and after RbfA during the maturation of 16S rRNA. It has affinity for free ribosomal 30S subunits but not for 70S ribosomes. The protein is Ribosome maturation factor RimM of Bacillus thuringiensis (strain Al Hakam).